The chain runs to 146 residues: Hemoglobin subunit beta (146 aa).

Val1 bears the N-acetylvaline mark. In terms of domain architecture, Globin spans 2-146 (HLTGEEKSAV…VANALAHKYH (145 aa)). Thr12 carries the phosphothreonine modification. Ser44 bears the Phosphoserine mark. Lys59 is subject to N6-acetyllysine. Residue His63 coordinates heme b. N6-acetyllysine is present on Lys82. Residue His92 coordinates heme b. An S-nitrosocysteine modification is found at Cys93. Residue Lys144 is modified to N6-acetyllysine.

It belongs to the globin family. Heterotetramer of two alpha chains and two beta chains. As to expression, red blood cells.

Functionally, involved in oxygen transport from the lung to the various peripheral tissues. In Nycticebus coucang (Slow loris), this protein is Hemoglobin subunit beta (HBB).